We begin with the raw amino-acid sequence, 152 residues long: Transcriptional regulator MraZ (152 aa).

SpoVT-AbrB domains follow at residues 5–52 and 81–124; these read ANAV…PLPE and AVDL…NEDA.

It belongs to the MraZ family. As to quaternary structure, forms oligomers.

It localises to the cytoplasm. Its subcellular location is the nucleoid. The chain is Transcriptional regulator MraZ from Azotobacter vinelandii (strain DJ / ATCC BAA-1303).